The chain runs to 130 residues: uncharacterized protein (130 aa).

Belongs to the thioester dehydratase family. FabZ subfamily.

This is an uncharacterized protein from Bacillus subtilis (strain 168).